The chain runs to 590 residues: Multidrug resistance ABC transporter ATP-binding and permease protein (590 aa).

6 helical membrane passes run 35–55 (YLFFIIGILAGIVGTLIQLQV), 79–99 (IALYIGSAAVSAIAAIVLGIF), 150–170 (IPQAFTSILLLVGSIVFMLQM), 176–196 (LAMIIAVPVVMLIMFPIMTFG), 261–281 (VMMLSMMLMIFGLLAYGIYLI), and 292–312 (LGMMMYLMNLIGAVPTVATFF). Residues 38–317 (FIIGILAGIV…VATFFTELAK (280 aa)) enclose the ABC transmembrane type-1 domain. Positions 349 to 584 (LSARHVDFAY…HPLYAKYVSE (236 aa)) constitute an ABC transporter domain. Position 382-389 (382-389 (GPSGGGKS)) interacts with ATP.

Belongs to the ABC transporter superfamily. Multidrug exporter LmrA (TC 3.A.1.117.1) family. In terms of assembly, homodimer.

Its subcellular location is the cell membrane. It carries out the reaction ATP + H2O + xenobioticSide 1 = ADP + phosphate + xenobioticSide 2.. Its function is as follows. Efflux transporter for a variety of amphiphilic cationic compounds, including antibiotics. In Lactococcus lactis subsp. lactis (strain IL1403) (Streptococcus lactis), this protein is Multidrug resistance ABC transporter ATP-binding and permease protein (lmrA).